The sequence spans 957 residues: PE-PGRS family protein PE_PGRS3 (957 aa).

In terms of domain architecture, PE spans 4-94; that stretch reads VIAAPEVIAA…GAYAAAEAAA (91 aa). Basic residues predominate over residues 893-925; that stretch reads CRRQRRADRQRRQRRQRRQSRGHARCRRHRRAA. The interval 893–957 is disordered; sequence CRRQRRADRQ…GISCSPQMMP (65 aa).

It belongs to the mycobacterial PE family. PGRS subfamily. In terms of processing, a cleavage of the protein removes the N-terminal 120-150 residues, immediately upstream the PGRS domain. The exact position of the cleavage site could not be identified.

It localises to the cell outer membrane. It is found in the secreted. Its subcellular location is the cell wall. The protein localises to the cell surface. Its function is as follows. The arginine-rich C-terminal region protrudes from the mycobacterial membrane and mediates M.tuberculosis entry into host epithelial cells. May serve as a bridge between mycobacteria and host cells by interacting with specific host phospholipids and extracting them from host cells, for their direct integration or as a source of phosphate, during phases of TB pathogenesis when M.tuberculosis is short of phosphate supply. This Mycobacterium tuberculosis (strain ATCC 25618 / H37Rv) protein is PE-PGRS family protein PE_PGRS3.